The primary structure comprises 339 residues: Fructose-1,6-bisphosphatase class 1 (339 aa).

Residues Glu91, Asp113, Leu115, and Asp116 each contribute to the Mg(2+) site. Residues 116–119 (DGSS), Asn210, and Lys276 each bind substrate. Glu282 contributes to the Mg(2+) binding site.

Belongs to the FBPase class 1 family. Homotetramer. The cofactor is Mg(2+).

It is found in the cytoplasm. The catalysed reaction is beta-D-fructose 1,6-bisphosphate + H2O = beta-D-fructose 6-phosphate + phosphate. Its pathway is carbohydrate biosynthesis; gluconeogenesis. The protein is Fructose-1,6-bisphosphatase class 1 of Bordetella bronchiseptica (strain ATCC BAA-588 / NCTC 13252 / RB50) (Alcaligenes bronchisepticus).